A 614-amino-acid chain; its full sequence is Zinc metalloproteinase-disintegrin-like Eoc1 (614 aa).

The first 19 residues, 1–19, serve as a signal peptide directing secretion; that stretch reads MQVLLITISLAVLPYLGSS. Positions 20–193 are excised as a propeptide; it reads IILESGIVND…KASQLNLTPE (174 aa). Gln194 carries the post-translational modification Pyrrolidone carboxylic acid. The Peptidase M12B domain occupies 202–398; sequence KHIKVAIVAD…KMPQCILIKP (197 aa). Asn268 carries N-linked (GlcNAc...) asparagine glycosylation. 3 cysteine pairs are disulfide-bonded: Cys313-Cys393, Cys353-Cys377, and Cys355-Cys360. A Zn(2+)-binding site is contributed by His338. Glu339 is an active-site residue. The Zn(2+) site is built by His342 and His348. Asn376 carries an N-linked (GlcNAc...) asparagine glycan. One can recognise a Disintegrin domain in the interval 406–492; the sequence is PPVCGNSLVE…ECPADQFQRN (87 aa). Val408, Asn411, Leu413, Glu415, Glu418, and Asp421 together coordinate Ca(2+). 14 disulfide bridges follow: Cys409/Cys438, Cys420/Cys433, Cys422/Cys428, Cys432/Cys455, Cys446/Cys452, Cys451/Cys477, Cys464/Cys484, Cys471/Cys503, Cys496/Cys508, Cys515/Cys565, Cys530/Cys576, Cys543/Cys553, Cys560/Cys602, and Cys596/Cys607. Positions 470–472 match the D/ECD-tripeptide motif; sequence ECD. Residue Asn498 is glycosylated (N-linked (GlcNAc...) asparagine).

Belongs to the venom metalloproteinase (M12B) family. P-III subfamily. P-IIIc sub-subfamily. In terms of assembly, heterodimer; disulfide-linked. Zn(2+) serves as cofactor. In terms of tissue distribution, expressed by the venom gland.

It is found in the secreted. In terms of biological role, this metalloproteinase hydrolyzes azocasein, and oxidized insulin B-chain. Also hydrolyzes the alpha-chain (FGA) and more slowly the beta-chain of fibrinogen (FGB), without affecting the gamma-chain. Does not cleave fibrin. Inhibits endothelial cell adhesion to extracellular matrix proteins such as fibrinogen, fibronectin, vitronectin, collagen I, and collagen IV. Induces apoptosis in vascular endothelial cells. The polypeptide is Zinc metalloproteinase-disintegrin-like Eoc1 (Svmp3-Eoc1) (Echis ocellatus (Ocellated saw-scaled viper)).